A 40-amino-acid polypeptide reads, in one-letter code: Photosystem II reaction center protein J (40 aa).

The chain crosses the membrane as a helical span at residues 8–28 (IPLWLVGTVAGILVIGLIGIF).

This sequence belongs to the PsbJ family. In terms of assembly, PSII is composed of 1 copy each of membrane proteins PsbA, PsbB, PsbC, PsbD, PsbE, PsbF, PsbH, PsbI, PsbJ, PsbK, PsbL, PsbM, PsbT, PsbX, PsbY, PsbZ, Psb30/Ycf12, at least 3 peripheral proteins of the oxygen-evolving complex and a large number of cofactors. It forms dimeric complexes.

The protein localises to the plastid. The protein resides in the chloroplast thylakoid membrane. Functionally, one of the components of the core complex of photosystem II (PSII). PSII is a light-driven water:plastoquinone oxidoreductase that uses light energy to abstract electrons from H(2)O, generating O(2) and a proton gradient subsequently used for ATP formation. It consists of a core antenna complex that captures photons, and an electron transfer chain that converts photonic excitation into a charge separation. This Gnetum parvifolium (Small-leaved jointfir) protein is Photosystem II reaction center protein J.